The sequence spans 271 residues: Phosphatidylglycerol--prolipoprotein diacylglyceryl transferase (271 aa).

Helical transmembrane passes span 21–41, 60–80, 95–115, 124–144, 177–197, 203–223, and 236–256; these read LAVR…MWLA, LLFA…VIFY, VWTG…AMFW, FFGV…MGRI, QLYE…WFIG, GSVS…VEYV, and FISM…LMMV. Arginine 143 contributes to the a 1,2-diacyl-sn-glycero-3-phospho-(1'-sn-glycerol) binding site.

It belongs to the Lgt family.

It localises to the cell inner membrane. It catalyses the reaction L-cysteinyl-[prolipoprotein] + a 1,2-diacyl-sn-glycero-3-phospho-(1'-sn-glycerol) = an S-1,2-diacyl-sn-glyceryl-L-cysteinyl-[prolipoprotein] + sn-glycerol 1-phosphate + H(+). It participates in protein modification; lipoprotein biosynthesis (diacylglyceryl transfer). Its function is as follows. Catalyzes the transfer of the diacylglyceryl group from phosphatidylglycerol to the sulfhydryl group of the N-terminal cysteine of a prolipoprotein, the first step in the formation of mature lipoproteins. This is Phosphatidylglycerol--prolipoprotein diacylglyceryl transferase from Vibrio cholerae serotype O1 (strain ATCC 39541 / Classical Ogawa 395 / O395).